Here is a 1499-residue protein sequence, read N- to C-terminus: Rho GTPase-activating protein 35 (1499 aa).

Positions 1-266 (MMMARKQDVR…IPYFEALKQQ (266 aa)) are has GTPase activity, required for proper localization. GTP contacts are provided by residues Lys-28, 33–37 (IGKSC), Leu-52, Ser-56, 95–97 (EQT), 201–203 (KCD), and 229–231 (SAR). 4 FF domains span residues 270–327 (IATA…HIHR), 368–422 (KLLE…HLEK), 429–483 (RAEM…HQKQ), and 485–550 (IDRA…HIHF). Tyr-308 carries the post-translational modification Phosphotyrosine. Position 589 is a phosphoserine (Ser-589). Positions 592–767 (DPNIDRINLV…LLDSKRNLNL (176 aa)) constitute a pG1 pseudoGTPase domain. Phosphoserine is present on residues Ser-770 and Ser-773. The pG2 pseudoGTPase domain maps to 783-947 (RIVMCLMCGD…FKDVVEKKNI (165 aa)). Ser-970, Ser-975, Ser-985, and Ser-1072 each carry phosphoserine. Tyr-1087 is modified (phosphotyrosine). Tyr-1105 bears the Phosphotyrosine; by ABL2 and PTK6 mark. Residues 1124 to 1141 (KAQSNGSGNGSDSEMDTS) show a composition bias toward polar residues. Residues 1124 to 1148 (KAQSNGSGNGSDSEMDTSSLERGRK) form a disordered region. A phosphoserine mark is found at Ser-1134, Ser-1142, Ser-1150, Ser-1176, Ser-1179, and Ser-1221. Residues 1177 to 1207 (VGSDDELGPIRKKEEDQASQGYKGDNAVIPY) form a disordered region. A required for phospholipid binding and regulation of the substrate preference region spans residues 1213-1236 (PRRRNILRSLRRNTKKPKPKPRPS). Thr-1226 is subject to Phosphothreonine. Residue Ser-1236 is modified to Phosphoserine. In terms of domain architecture, Rho-GAP spans 1249 to 1436 (VPLTTVVTPE…LFIQQCPFFF (188 aa)). The tract at residues 1446–1499 (GAAPGSPSAMAPTVPFLTSTPATSQPSPPQSPPPTPQSPMQPLLSSQLQAEHTL) is disordered. Low complexity predominate over residues 1448–1470 (APGSPSAMAPTVPFLTSTPATSQ). The span at 1471-1484 (PSPPQSPPPTPQSP) shows a compositional bias: pro residues. Phosphoserine occurs at positions 1472 and 1476. A Phosphothreonine modification is found at Thr-1480. Ser-1483 is modified (phosphoserine). A compositionally biased stretch (low complexity) spans 1485 to 1499 (MQPLLSSQLQAEHTL).

As to quaternary structure, interacts with RASA1. Interacts with the general transcription factor GTF2I, the interaction sequesters GTF2I in the cytoplasm. Phosphorylation of Tyr-1105 by PTK6 promotes the association with RASA1, inactivating RHOA while activating RAS. Phosphorylation at Tyr-308 by PDGFRA inhibits binding to GTF2I. Phosphorylated by PRKCA at Ser-1221 and Thr-1226, induces relocalization from the cytoplasm to regions of plasma membrane ruffling and prevents the binding and substrate specificity regulation by phospholipids. In brain, phosphorylated by FYN and SRC. During focal adhesion formation, phosphorylated by MAPK1 and MAPK3 at the C-terminal region, probably at Ser-1451, Ser-1476, Thr-1480 and Ser-1483. Phosphorylation by MAPK1 and MAPK3 inhibits GAP function and localizes ARGHAP35 away from newly forming focal adhesions and stress fibers in cells spreading on fibronectin. Phosphorylation at Ser-1476 and Thr-1480 by GSK3B requires priming by MAPK and inhibits RhoGAP activity and modulates polarized cell migration. Ubiquitously expressed.

The protein localises to the cytoplasm. The protein resides in the cytoskeleton. It is found in the cilium basal body. It localises to the nucleus. Its subcellular location is the cell membrane. Functionally, rho GTPase-activating protein (GAP). Binds several acidic phospholipids which inhibits the Rho GAP activity to promote the Rac GAP activity. This binding is inhibited by phosphorylation by PRKCA. Involved in cell differentiation as well as cell adhesion and migration, plays an important role in retinal tissue morphogenesis, neural tube fusion, midline fusion of the cerebral hemispheres and mammary gland branching morphogenesis. Transduces signals from p21-ras to the nucleus, acting via the ras GTPase-activating protein (GAP). Transduces SRC-dependent signals from cell-surface adhesion molecules, such as laminin, to promote neurite outgrowth. Regulates axon outgrowth, guidance and fasciculation. Modulates Rho GTPase-dependent F-actin polymerization, organization and assembly, is involved in polarized cell migration and in the positive regulation of ciliogenesis and cilia elongation. During mammary gland development, is required in both the epithelial and stromal compartments for ductal outgrowth. Represses transcription of the glucocorticoid receptor by binding to the cis-acting regulatory sequence 5'-GAGAAAAGAAACTGGAGAAACTC-3'; this function is however unclear and would need additional experimental evidences. The protein is Rho GTPase-activating protein 35 of Rattus norvegicus (Rat).